A 213-amino-acid chain; its full sequence is uncharacterized protein (213 aa).

Over residues Met1–Asn11 the composition is skewed to basic and acidic residues. Disordered stretches follow at residues Met1–Asn21 and Leu63–Trp98. Polar residues predominate over residues Arg12–Asn21. Basic and acidic residues predominate over residues Leu63 to Gln93.

This is an uncharacterized protein from Escherichia coli (strain K12).